A 229-amino-acid chain; its full sequence is Protein GrpE (229 aa).

Disordered regions lie at residues 1–49 (MTEG…SANS) and 207–229 (DSTA…EDGD). A compositionally biased stretch (basic and acidic residues) spans 13–24 (TDKRRIDPDTGE).

This sequence belongs to the GrpE family. As to quaternary structure, homodimer.

It is found in the cytoplasm. In terms of biological role, participates actively in the response to hyperosmotic and heat shock by preventing the aggregation of stress-denatured proteins, in association with DnaK and GrpE. It is the nucleotide exchange factor for DnaK and may function as a thermosensor. Unfolded proteins bind initially to DnaJ; upon interaction with the DnaJ-bound protein, DnaK hydrolyzes its bound ATP, resulting in the formation of a stable complex. GrpE releases ADP from DnaK; ATP binding to DnaK triggers the release of the substrate protein, thus completing the reaction cycle. Several rounds of ATP-dependent interactions between DnaJ, DnaK and GrpE are required for fully efficient folding. The polypeptide is Protein GrpE (Mycobacterium leprae (strain TN)).